The chain runs to 382 residues: MKKVEILKTPVIQQRPVAPSRTSSPPVTAPRIAIKPRPPPASGNSGIPENNGPISPPDSSVSKSSGMKESVRFLNDIGEITDSISDLLTNSPNFNVISAIGPQGAGKSTILSMLAGNNSRQMYREYVFRPVSREANEQSRHQTTQIDIYVTNHQIFLDCQPMHSFSIMEGLPKLRGGRLDEATAMSDTLRLTAFLLFISHTVLVISETHFDKTIIDTIRTSEQIRPWLHQFRPKLSIERMTNLVFIKTKASSIDTAPSVIRERAQLLRLAFRDSKWLKISKEPFKCLLVLEEIRVKREHLYEGEDEIDETMLNEFDEHIAQLRVMLQRNRDDFTVETAAMDEKKWLEMCQEVIRDKTFHRILKEFHRSDRDRSSIYAENGDR.

Positions Met-1–Gly-66 are disordered.

The protein belongs to the SMG9 family.

Involved in nonsense-mediated decay (NMD) of mRNAs containing premature stop codons. Probable component of kinase complex containing smg-1 and recruited to stalled ribosomes. The chain is Nonsense-mediated mRNA decay factor SMG9 (smg-9) from Caenorhabditis briggsae.